The primary structure comprises 343 residues: Transcription factor MYB11 (343 aa).

2 HTH myb-type domains span residues 9–61 (KVGI…INYL) and 62–116 (RSDI…SRKL). DNA-binding regions (H-T-H motif) lie at residues 37 to 61 (WRSL…INYL) and 89 to 112 (WSTI…NSHL). A disordered region spans residues 126–146 (ANTVENAPPPPKRRPGRTSRS).

As to expression, expressed in seedlings, roots, cotyledons, leaves and apical meristems.

It is found in the nucleus. Functionally, modulates overall growth by reducing the proliferation activity of meristematic cells and delaying development. Flavonol-specific transcription activator involved in the regulation of several genes of flavonoid biosynthesis. Activates the expression of CHS, CHI, F3H and FLS1. Confers tolerance to UV-B. The polypeptide is Transcription factor MYB11 (Arabidopsis thaliana (Mouse-ear cress)).